A 339-amino-acid chain; its full sequence is NADH-quinone oxidoreductase subunit H (339 aa).

Helical transmembrane passes span 7–27 (LFWI…AVAY), 77–97 (VLFV…WAVI), 112–132 (LLYI…AGWA), 149–169 (VVSY…AAGS), 180–200 (AGGI…VYWI), 235–255 (VFFL…AVMF), 276–296 (VPGV…YLWF), and 315–335 (VLIP…VTGF).

Belongs to the complex I subunit 1 family. As to quaternary structure, NDH-1 is composed of 14 different subunits. Subunits NuoA, H, J, K, L, M, N constitute the membrane sector of the complex.

Its subcellular location is the cell inner membrane. The enzyme catalyses a quinone + NADH + 5 H(+)(in) = a quinol + NAD(+) + 4 H(+)(out). Its function is as follows. NDH-1 shuttles electrons from NADH, via FMN and iron-sulfur (Fe-S) centers, to quinones in the respiratory chain. The immediate electron acceptor for the enzyme in this species is believed to be ubiquinone. Couples the redox reaction to proton translocation (for every two electrons transferred, four hydrogen ions are translocated across the cytoplasmic membrane), and thus conserves the redox energy in a proton gradient. This subunit may bind ubiquinone. The sequence is that of NADH-quinone oxidoreductase subunit H from Alkalilimnicola ehrlichii (strain ATCC BAA-1101 / DSM 17681 / MLHE-1).